Reading from the N-terminus, the 636-residue chain is Biosynthetic arginine decarboxylase (636 aa).

K101 is subject to N6-(pyridoxal phosphate)lysine. 286–296 (FDVGGGLAVDY) is a binding site for substrate.

Belongs to the Orn/Lys/Arg decarboxylase class-II family. SpeA subfamily. Mg(2+) serves as cofactor. It depends on pyridoxal 5'-phosphate as a cofactor.

It carries out the reaction L-arginine + H(+) = agmatine + CO2. The protein operates within amine and polyamine biosynthesis; agmatine biosynthesis; agmatine from L-arginine: step 1/1. Catalyzes the biosynthesis of agmatine from arginine. The chain is Biosynthetic arginine decarboxylase from Shewanella amazonensis (strain ATCC BAA-1098 / SB2B).